Consider the following 428-residue polypeptide: Flotillin-2 (428 aa).

G2 is lipidated: N-myristoyl glycine. A lipid anchor (S-palmitoyl cysteine; by ZDHHC5) is attached at C4. C19 carries the S-palmitoyl cysteine lipid modification. C20 carries the S-palmitoyl cysteine; by ZDHHC5 lipid modification. The residue at position 405 (S405) is a Phosphoserine.

Belongs to the band 7/mec-2 family. Flotillin subfamily. In terms of assembly, heterooligomeric complex of flotillin-1 and flotillin-2 and caveolin-1 and caveolin-2. Interacts with ECPAS. Post-translationally, ZDHHC5-catalyzed palmitoylation may be required for the formation of higher-order complexes and for neurite outgrowth in cultured neural stem cells. In terms of tissue distribution, expressed in many tissues, including suprabasal epidermis, hair follicles, heart, lung, thymus, spleen, liver, kidney and brain. Not expressed in skeletal muscle.

The protein resides in the cell membrane. It localises to the membrane. Its subcellular location is the caveola. It is found in the endosome. May act as a scaffolding protein within caveolar membranes, functionally participating in formation of caveolae or caveolae-like vesicles. May be involved in epidermal cell adhesion and epidermal structure and function. This Mus musculus (Mouse) protein is Flotillin-2 (Flot2).